A 963-amino-acid chain; its full sequence is MHC class II regulatory factor RFX1 (963 aa).

Disordered stretches follow at residues 1–88 (MATQ…APSP), 105–126 (ASETVSEASPSSTASQTGVPTQ), 174–218 (QSPA…GTPA), and 361–392 (SSSEAGASNSSVGAGGNGGGGSSGGGSGGSSG). Over residues 20–41 (PQAPPQALPQPPPPAAPQPPAA) the composition is skewed to pro residues. A compositionally biased stretch (low complexity) spans 42-67 (ATPQPQYVTELQSPQPQTQPPGSQKQ). Ser54 carries the post-translational modification Phosphoserine. A compositionally biased stretch (pro residues) spans 75–87 (APAPSQPATPAPS). Polar residues-rich tracts occupy residues 107–119 (ETVSEASPSSTAS), 181–196 (KSGQVSLTVHSAQQVH), and 204–214 (VQANNSTSKTA). Over residues 361 to 372 (SSSEAGASNSSV) the composition is skewed to low complexity. Residues 373 to 392 (GAGGNGGGGSSGGGSGGSSG) show a composition bias toward gly residues. Residues 423 to 498 (TVQWLLDNYE…YHYYGLRIKA (76 aa)) constitute a DNA-binding region (RFX-type winged-helix). A disordered region spans residues 899–948 (SLNPLDPDKDEEEEEEEESEDELPQDISLAAGSESPALGPEALEPPAKLA). The span at 906 to 922 (DKDEEEEEEEESEDELP) shows a compositional bias: acidic residues. The segment covering 932–947 (ESPALGPEALEPPAKL) has biased composition (low complexity). Phosphoserine is present on residues Ser962 and Ser963.

This sequence belongs to the RFX family. Homodimer; binds DNA as a homodimer. Heterodimer; heterodimerizes with RFX2 and RFX3.

It is found in the nucleus. Regulatory factor essential for MHC class II genes expression. Binds to the X boxes of MHC class II genes. In Mus musculus (Mouse), this protein is MHC class II regulatory factor RFX1 (Rfx1).